The chain runs to 335 residues: Avermitilol synthase (335 aa).

The Mg(2+) site is built by Asp80, Asp84, Asn219, Ser223, and Glu227. Positions 80-84 (DDQFD) match the DDXXD motif motif.

This sequence belongs to the terpene synthase family. It depends on Mg(2+) as a cofactor.

It catalyses the reaction (2E,6E)-farnesyl diphosphate + H2O = avermitilol + diphosphate. Its function is as follows. Catalyzes the cyclization of farnesyl diphosphate to avermitilol. This Streptomyces avermitilis (strain ATCC 31267 / DSM 46492 / JCM 5070 / NBRC 14893 / NCIMB 12804 / NRRL 8165 / MA-4680) protein is Avermitilol synthase (tpc1).